The following is a 743-amino-acid chain: Polyribonucleotide nucleotidyltransferase (743 aa).

Mg(2+) contacts are provided by aspartate 489 and aspartate 495. The KH domain maps to 556-618 (PRIEKMHIGK…PCIDAAIGMI (63 aa)). The S1 motif domain occupies 628–698 (GETYPGKITS…KTGKFKLSRK (71 aa)). Residues 704-743 (PEGYVEPQPRERRERREGGREGGRNFERRGGDRDHREPRG) are disordered.

This sequence belongs to the polyribonucleotide nucleotidyltransferase family. It depends on Mg(2+) as a cofactor.

It localises to the cytoplasm. It carries out the reaction RNA(n+1) + phosphate = RNA(n) + a ribonucleoside 5'-diphosphate. In terms of biological role, involved in mRNA degradation. Catalyzes the phosphorolysis of single-stranded polyribonucleotides processively in the 3'- to 5'-direction. This Porphyromonas gingivalis (strain ATCC 33277 / DSM 20709 / CIP 103683 / JCM 12257 / NCTC 11834 / 2561) protein is Polyribonucleotide nucleotidyltransferase.